The chain runs to 469 residues: Spermatogenesis-associated protein 21 (469 aa).

Disordered regions lie at residues 1 to 76 (MDNR…AGTQ) and 99 to 157 (HRRA…MGAP). Residues 49–61 (EVRDIGERREPDR) are compositionally biased toward basic and acidic residues. Residues 62 to 73 (AQQQPQKPAVAA) are compositionally biased toward low complexity. Polar residues predominate over residues 105–132 (ARSQTAQKSPRTLTPVPTSAPSLPQTPA). Over residues 146–157 (APGPEPAPMGAP) the composition is skewed to pro residues. A coiled-coil region spans residues 198–225 (EPEEQSLQKLYQNREKSEEQLTLKQEEA). Positions 255–290 (VTLAQVEDALMSADVNGDGRVDFKDFLAVMTDTRRF) constitute an EF-hand domain. Residues D268, N270, D272, R274, and D279 each contribute to the Ca(2+) site. A disordered region spans residues 424 to 469 (YALDQCTPPGLDPDIRSPFFQSGSQGNREHNSDSRKWLSSVPARTH). The span at 450-459 (NREHNSDSRK) shows a compositional bias: basic and acidic residues.

Its function is as follows. Involved in the differentiation of haploid spermatids. This chain is Spermatogenesis-associated protein 21 (SPATA21), found in Homo sapiens (Human).